The chain runs to 179 residues: DELTA-miturgitoxin-Cp2a (179 aa).

Residues 1–20 (MKFSLFFGVLFLAILHSCLS) form the signal peptide. Residues 21-47 (ESEKDLTDEDHFRSSDSFLSEIQEESR) constitute a propeptide that is removed on maturation. The Processing quadruplet motif signature appears at 44-47 (EESR). 8 disulfides stabilise this stretch: Cys51–Cys66, Cys58–Cys75, Cys65–Cys88, Cys77–Cys86, Cys115–Cys130, Cys122–Cys139, Cys129–Cys158, and Cys141–Cys156. The residue at position 178 (Val178) is a Valine amide.

The protein belongs to the spider toxin CSTX family. Double-CSTX subfamily. Cleavage of the propeptide depends on the processing quadruplet motif (XXXR, with at least one of X being E). Expressed by the venom gland.

The protein localises to the secreted. Its function is as follows. Spider venom toxin that exhibits cytolytic activity by forming an alpha-helix across the membrane. Lethal to insect larvae. This is DELTA-miturgitoxin-Cp2a from Cheiracanthium punctorium (Yellow sac spider).